A 345-amino-acid polypeptide reads, in one-letter code: Transcription factor 19 (345 aa).

Residues 31–88 form the FHA domain; the sequence is YRLGHRADLCDVALRPQQEPGLISGIHAELHAEPRGDDWRVSLEDHSSQGTLVNNVRL. Ser-78 carries the phosphoserine modification. The interval 190 to 227 is disordered; the sequence is LTFSPSWGGPKSLPVPAPPGEMGTTPSAPPQRNRRKSV. Residues 293–342 form a PHD-type zinc finger; it reads AAPCCCLPQEETVAWVQCDGCDVWFHVACVGCSIQAAREADFRCPGCRAG. Zn(2+) contacts are provided by Cys-296, Cys-298, Cys-310, Cys-313, His-318, Cys-321, Cys-336, and Cys-339.

Its subcellular location is the nucleus. Functionally, potential transcription factor that may play a role in the regulation of genes involved in cell cycle G1/S transition. May bind to regulatory elements of genes, including the promoter of the transcription factor FOXO1. The polypeptide is Transcription factor 19 (TCF19) (Homo sapiens (Human)).